Consider the following 66-residue polypeptide: Large ribosomal subunit protein bL35 (66 aa).

A disordered region spans residues 1–22 (MAYKLKSHRGAAKRFKKTASGG).

The protein belongs to the bacterial ribosomal protein bL35 family.

This is Large ribosomal subunit protein bL35 from Pseudoalteromonas translucida (strain TAC 125).